Consider the following 246-residue polypeptide: MPAKLSVNLNAIAMLRNRRDLPWPSVTGLGRAALAAGAAGLTVHPRPDQRHIRFSDLGDIRALIDDEYPQAEFNIEGFPSEAFLDLVEKHEPEQVTLVPDDPMQATSDHGWDFMSKADFLAPIVARLKGRGMRVSLFADPDSLGYERAKAIGADRVELYTGPYGATHDDPAAAARELDRLEKAARAATALGLAVNAGHDLTVDNLPALVKRIPQLAEVSIGHGLTADALMYGIPVTVSRYITALAG.

Residues asparagine 8 and arginine 19 each coordinate 3-amino-2-oxopropyl phosphate. Histidine 44 serves as the catalytic Proton acceptor. 1-deoxy-D-xylulose 5-phosphate is bound by residues arginine 46 and histidine 51. The active-site Proton acceptor is the glutamate 76. Threonine 106 contacts 1-deoxy-D-xylulose 5-phosphate. Histidine 198 (proton donor) is an active-site residue. Residues aspartate 199 and 221 to 222 (GH) contribute to the 3-amino-2-oxopropyl phosphate site.

It belongs to the PNP synthase family. In terms of assembly, homooctamer; tetramer of dimers.

The protein localises to the cytoplasm. It carries out the reaction 3-amino-2-oxopropyl phosphate + 1-deoxy-D-xylulose 5-phosphate = pyridoxine 5'-phosphate + phosphate + 2 H2O + H(+). Its pathway is cofactor biosynthesis; pyridoxine 5'-phosphate biosynthesis; pyridoxine 5'-phosphate from D-erythrose 4-phosphate: step 5/5. Its function is as follows. Catalyzes the complicated ring closure reaction between the two acyclic compounds 1-deoxy-D-xylulose-5-phosphate (DXP) and 3-amino-2-oxopropyl phosphate (1-amino-acetone-3-phosphate or AAP) to form pyridoxine 5'-phosphate (PNP) and inorganic phosphate. This is Pyridoxine 5'-phosphate synthase from Brucella abortus (strain S19).